The sequence spans 1268 residues: Vigilin (1268 aa).

At S2 the chain carries N-acetylserine. Residue T8 is modified to Phosphothreonine. A phosphoserine mark is found at S11 and S31. 7 KH domains span residues 150–212, 222–284, 295–357, 364–424, 435–497, 507–570, and 581–643; these read QASA…RHEV, RAVE…VARI, TTTI…LTEV, FTVS…QEQI, MDYV…KREL, ERTK…TKYM, and SYSI…RSRI. A phosphothreonine mark is found at T295 and T296. S317 is modified (phosphoserine). Y437 carries the post-translational modification Phosphotyrosine. The residue at position 645 (S645) is a Phosphoserine. 7 KH domains span residues 653–716, 727–790, 800–863, 873–967, 972–1034, 1052–1117, and 1127–1190; these read IAEV…KKQL, SFTV…QKEL, VVED…KKRI, QVTV…KEAL, PVTI…KAGL, SFKL…RDAI, and MVSE…IDHI. The tract at residues 910-947 is disordered; it reads PDREENPVHSVEPSIQENGDEAGEGREAKETDPGSPRR. The span at 932–947 shows a compositional bias: basic and acidic residues; sequence GEGREAKETDPGSPRR. The residue at position 991 (K991) is an N6-acetyllysine. The tract at residues 1213–1268 is disordered; it reads PPAHEESRAPSKGFVVRDAPWTSNSSEKAPDMSSSEEFPSFGAQVAPKTLPWGPKR. A compositionally biased stretch (polar residues) spans 1233-1249; the sequence is WTSNSSEKAPDMSSSEE. 2 positions are modified to phosphoserine: S1247 and S1252.

It is found in the cytoplasm. The protein localises to the nucleus. Appears to play a role in cell sterol metabolism. It may function to protect cells from over-accumulation of cholesterol. The protein is Vigilin (Hdlbp) of Mus musculus (Mouse).